Here is an 872-residue protein sequence, read N- to C-terminus: MSRRNQKKPQAPIGNETNLDFVLQNLEVYKSQIEHYKTQQQQIKEEDLKLLKFKNQDQDGNSGNDDDDEENNSNKQQELLRRVNQIKQQVQLIKKVGSKVEKDLNLNEDENKKNGLSEQQVKEEQLRTITEEQVKYQNLVFNMDYQLDLNESGGHRRHRRETDYDTEKWFEISHDQKNYVSIYANQKTSYCWWLKDYFNKNNYDHLNVSINRLETEAEFYAFDDFSQTIKLTNNSYQTVNIDVNFDNNLCILALLRFLLSLERFNILNIRSSYTRNQYNFEKIGELLETIFAVVFSHRHLQGIHLQVPCEAFQYLVNSSSQISVKDSQLQVYSFSTDLKLVDTNKVQDYFKFLQEFPRLTHVSQQAIPVSATNAVENLNVLLKKVKHANLNLVSIPTQFNFDFYFVNLQHLKLEFGLEPNILTKQKLENLLLSIKQSKNLKFLRLNFYTYVAQETSRKQILKQATTIKNLKNNKNQEETPETKDETPSESTSGMKFFDHLSELTELEDFSVNLQATQEIYDSLHKLLIRSTNLKKFKLSYKYEMEKSKMDTFIDLKNIYETLNNLKRCSVNISNPHGNISYELTNKDSTFYKFKLTLNQELQHAKYTFKQNEFQFNNVKSAKIESSSLESLEDIDSLCKSIASCKNLQNVNIIASLLYPNNIQKNPFNKPNLLFFKQFEQLKNLENVSINCILDQHILNSISEFLEKNKKIKAFILKRYYLLQYYLDYTKLFKTLQQLPELNQVYINQQLEELTVSEVHKQVWENHKQKAFYEPLCEFIKESSQTLQLIDFDQNTVSDDSIKKILESISESKYHHYLRLNPSQSSSLIKSENEEIQELLKACDEKGVLVKAYYKFPLCLPTGTYYDYNSDRW.

2 disordered regions span residues 55-75 (NQDQ…NSNK) and 471-492 (KNNK…ESTS). The segment covering 474-486 (KNQEETPETKDET) has biased composition (basic and acidic residues).

As to quaternary structure, telomerase consist of two subunit, p80 and p95 that form a 1:1:1 complex with the 159 nt telomerase RNA.

The protein localises to the nucleus. It localises to the chromosome. It is found in the telomere. It carries out the reaction DNA(n) + a 2'-deoxyribonucleoside 5'-triphosphate = DNA(n+1) + diphosphate. Its function is as follows. Ribonucleoprotein DNA polymerase that catalyzes the de novo synthesis of telomeric simple sequence repeats. Subunit p95 contains some or all of the template-independent primer DNA-binding site termed the anchor site. The protein is Telomerase component p95 of Tetrahymena thermophila.